A 52-amino-acid chain; its full sequence is Ovomucoid (52 aa).

The region spanning 2 to 52 (VDCSEYPKPACPKDYRPVCGSDNKTYGNKCNFCNAVVESNGTLTLNRFGKC) is the Kazal-like domain. Intrachain disulfides connect cysteine 4/cysteine 34, cysteine 12/cysteine 31, and cysteine 20/cysteine 52. Asparagine 41 carries an N-linked (GlcNAc...) asparagine glycan.

The protein resides in the secreted. This chain is Ovomucoid, found in Coturnix delegorguei (Harlequin quail).